The sequence spans 396 residues: Digeranylgeranylglycerophospholipid reductase (396 aa).

FAD-binding residues include G14, E33, C44, G45, G47, R100, A124, E162, D283, G295, and I296. Residues K338 and V374 each coordinate a 2,3-bis-O-(geranylgeranyl)-sn-glycerol 1-phospholipid.

It belongs to the geranylgeranyl reductase family. DGGGPL reductase subfamily. It depends on FAD as a cofactor.

It carries out the reaction 2,3-bis-O-(phytanyl)-sn-glycerol 1-phosphate + 8 NADP(+) = 2,3-bis-O-(geranylgeranyl)-sn-glycerol 1-phosphate + 8 NADPH + 8 H(+). The catalysed reaction is 2,3-bis-O-(phytanyl)-sn-glycerol 1-phosphate + 8 NAD(+) = 2,3-bis-O-(geranylgeranyl)-sn-glycerol 1-phosphate + 8 NADH + 8 H(+). The enzyme catalyses a 2,3-bis-O-phytanyl-sn-glycerol 1-phospholipid + 8 A = a 2,3-bis-O-(geranylgeranyl)-sn-glycerol 1-phospholipid + 8 AH2. It catalyses the reaction CDP-2,3-bis-O-(geranylgeranyl)-sn-glycerol + 8 AH2 = CDP-2,3-bis-O-(phytanyl)-sn-glycerol + 8 A. It carries out the reaction archaetidylserine + 8 AH2 = 2,3-bis-O-phytanyl-sn-glycero-3-phospho-L-serine + 8 A. Its pathway is membrane lipid metabolism; glycerophospholipid metabolism. Is involved in the reduction of 2,3-digeranylgeranylglycerophospholipids (unsaturated archaeols) into 2,3-diphytanylglycerophospholipids (saturated archaeols) in the biosynthesis of archaeal membrane lipids. Catalyzes the formation of archaetidic acid (2,3-di-O-phytanyl-sn-glyceryl phosphate) from 2,3-di-O-geranylgeranylglyceryl phosphate (DGGGP) via the hydrogenation of each double bond of the isoprenoid chains. Is also probably able to reduce double bonds of geranyl groups in CDP-2,3-bis-O-(geranylgeranyl)-sn-glycerol and archaetidylserine, thus acting at various stages in the biosynthesis of archaeal membrane lipids. This chain is Digeranylgeranylglycerophospholipid reductase, found in Thermoplasma volcanium (strain ATCC 51530 / DSM 4299 / JCM 9571 / NBRC 15438 / GSS1).